The sequence spans 1293 residues: Cilia- and flagella-associated protein 57 A (1293 aa).

The WD 1 repeat unit spans residues 72–113; that stretch reads PGTKGITCMTLSPSKRLLAWSEDCDSGIIVVFDLIKLDKLEK. The segment at 117–143 is disordered; that stretch reads QNYQEPSDKDKLDKQAEKDRRDRFEKE. Positions 122–143 are enriched in basic and acidic residues; it reads PSDKDKLDKQAEKDRRDRFEKE. 5 WD repeats span residues 309–348, 359–398, 411–450, 535–574, and 700–739; these read PKNE…KNPY, DMKA…MQLN, FHSD…LENS, RGSG…PQKT, and SHFG…YQVK. Coiled coils occupy residues 756 to 1016, 1045 to 1079, and 1209 to 1285; these read RDQY…REKT, IKEL…FKRT, and INHL…QIQN.

This sequence belongs to the CFAP57 family. Forms a heterodimer with CFAP57C. Associates with components of the nexin-dynein regulatory complex (N-DRC) and the CFAP184:CFAP263 complex.

It is found in the cell projection. It localises to the cilium. Functionally, associates with components of the nexin-dynein regulatory complex (N-DRC), a key regulator of ciliary/flagellar motility, and might act as an inner dynein arm (IDA) hub or linkage. The protein is Cilia- and flagella-associated protein 57 A (CFAP57A) of Tetrahymena thermophila (strain SB210).